A 293-amino-acid chain; its full sequence is Bifunctional protein FolD (293 aa).

Residues 165–167, Ser190, and Ile231 each bind NADP(+); that span reads GRS.

Belongs to the tetrahydrofolate dehydrogenase/cyclohydrolase family. In terms of assembly, homodimer.

The enzyme catalyses (6R)-5,10-methylene-5,6,7,8-tetrahydrofolate + NADP(+) = (6R)-5,10-methenyltetrahydrofolate + NADPH. It carries out the reaction (6R)-5,10-methenyltetrahydrofolate + H2O = (6R)-10-formyltetrahydrofolate + H(+). Its pathway is one-carbon metabolism; tetrahydrofolate interconversion. Functionally, catalyzes the oxidation of 5,10-methylenetetrahydrofolate to 5,10-methenyltetrahydrofolate and then the hydrolysis of 5,10-methenyltetrahydrofolate to 10-formyltetrahydrofolate. In Synechococcus sp. (strain WH7803), this protein is Bifunctional protein FolD.